The chain runs to 91 residues: uncharacterized protein (91 aa).

The first 20 residues, 1–20 (MFSRVLALLAVLLLSANTWA), serve as a signal peptide directing secretion.

The protein belongs to the BhsA/McbA family.

The protein localises to the periplasm. This is an uncharacterized protein from Escherichia coli O157:H7.